The primary structure comprises 276 residues: Outer plastidial membrane protein porin (276 aa).

Belongs to the eukaryotic mitochondrial porin (TC 1.B.8.1) family.

It localises to the plastid outer membrane. Forms a channel through the cell membrane that allows diffusion of small hydrophilic molecules. The channel adopts an open conformation at low or zero membrane potential and a closed conformation at potentials above 30-40 mV. The open state has a weak anion selectivity whereas the closed state is cation-selective. The polypeptide is Outer plastidial membrane protein porin (POR1) (Pisum sativum (Garden pea)).